Here is a 445-residue protein sequence, read N- to C-terminus: UPF0210 protein SSU05_0296 (445 aa).

The protein belongs to the UPF0210 family. In terms of assembly, homodimer.

The sequence is that of UPF0210 protein SSU05_0296 from Streptococcus suis (strain 05ZYH33).